A 128-amino-acid chain; its full sequence is MQKRVRNRLITIIICFCSAFLGISIILYNLEKNIVFFLPPSKINEIEQGKELRVGGLVKTDSINKIADDKISFVITDNIKDCEILYQGALPALFRKGQGIIAIGQLSNGKFIARQLLAKHDENYRPPQ.

The Cytoplasmic portion of the chain corresponds to 1-8; the sequence is MQKRVRNR. A helical; Signal-anchor for type II membrane protein membrane pass occupies residues 9-29; that stretch reads LITIIICFCSAFLGISIILYN. At 30–128 the chain is on the periplasmic side; that stretch reads LEKNIVFFLP…KHDENYRPPQ (99 aa). Heme-binding residues include histidine 120 and tyrosine 124.

Belongs to the CcmE/CycJ family.

The protein resides in the cell inner membrane. In terms of biological role, heme chaperone required for the biogenesis of c-type cytochromes. Transiently binds heme delivered by CcmC and transfers the heme to apo-cytochromes in a process facilitated by CcmF and CcmH. The polypeptide is Cytochrome c-type biogenesis protein CcmE (Rickettsia rickettsii (strain Iowa)).